The chain runs to 427 residues: MGSVRTNRYSIVSSEEDGMKLATLAVANGFGNGKSKVHTRQQCRSRFVKKDGHCNVQFINVGEKGQRYLADIFTTCVDIRWRWMLVIFCLAFVLSWLFFGCVFWLIALLHGDLDASKESKACVSEVNSFTAAFLFSIETQTTIGYGFRCVTDECPVAVFMVVFQSIVGCIIDAFIIGAVMAKMAKPKKRNETLVFSHNAVIAMRDGKLCLMWRVGNLRKSHLVEAHVRAQLLKSRITSEGEYIPLDQIDINVGFDSGIDRIFLVSPITIVHEIDEDSPLYDLSKQDIDNADFEIVVILEGMVEATAMTTQCRSSYLANEILWGHRYEPVLFEEKHYYKVDYSRFHKTYEVPNTPLCSARDLAEKKYILSNANSFCYENEVALTSKEEDDSENGVPESTSTDTPPDIDLHNQASVPLEPRPLRRESEI.

At 1–81 (MGSVRTNRYS…IFTTCVDIRW (81 aa)) the chain is on the cytoplasmic side. Cysteine 76 carries the S-nitrosocysteine modification. A helical transmembrane segment spans residues 82–106 (RWMLVIFCLAFVLSWLFFGCVFWLI). Over 107–128 (ALLHGDLDASKESKACVSEVNS) the chain is Extracellular. Residues 129–140 (FTAAFLFSIETQ) constitute an intramembrane region (helical; Pore-forming). The pore-forming intramembrane region spans 141 to 147 (TTIGYGF). The short motif at 142–147 (TIGYGF) is the Selectivity filter element. Over 148 to 156 (RCVTDECPV) the chain is Extracellular. A helical membrane pass occupies residues 157-178 (AVFMVVFQSIVGCIIDAFIIGA). The Cytoplasmic portion of the chain corresponds to 179–427 (VMAKMAKPKK…PRPLRRESEI (249 aa)). The segment at 181–208 (AKMAKPKKRNETLVFSHNAVIAMRDGKL) is polyphosphoinositide (PIP2)-binding. The interval 384–427 (SKEEDDSENGVPESTSTDTPPDIDLHNQASVPLEPRPLRRESEI) is disordered. Residues 425–427 (SEI) carry the PDZ-binding motif.

The protein belongs to the inward rectifier-type potassium channel (TC 1.A.2.1) family. KCNJ2 subfamily. Homotetramer. Homomultimeric and heteromultimeric association with KCNJ4/Kir2.3. Can form heteromeric channels with Kir2.6/KCNJ18. Associates, via its PDZ-recognition domain, with a complex containing LIN7A, LIN7B, LIN7C, DLG1, CASK and APBA1. S-nitrosylation increases the open probability and inward rectifying currents.

Its subcellular location is the cell membrane. The protein resides in the sarcolemma. The protein localises to the T-tubule. It carries out the reaction K(+)(in) = K(+)(out). Activated by phosphatidylinositol 4,5 biphosphate (PtdIns(4,5)P2). Its function is as follows. Inward rectifier potassium channels are characterized by a greater tendency to allow potassium to flow into the cell rather than out of it. Their voltage dependence is regulated by the concentration of extracellular potassium; as external potassium is raised, the voltage range of the channel opening shifts to more positive voltages. The inward rectification is mainly due to the blockage of outward current by internal magnesium. Can be blocked by extracellular barium and cesium. Probably participates in establishing action potential waveform and excitability of neuronal and muscle tissues. In Bos taurus (Bovine), this protein is Inward rectifier potassium channel 2 (KCNJ2).